The primary structure comprises 780 residues: ATP-dependent 6-phosphofructokinase, liver type (780 aa).

Alanine 2 carries the post-translational modification N-acetylalanine. The segment at 2–390 is N-terminal catalytic PFK domain 1; it reads AAVDLEKLRA…NWNIYKLLAH (389 aa). ATP contacts are provided by residues glycine 25, 88–89, and 118–121; these read RC and GDGS. Aspartate 119 is a Mg(2+) binding site. Residues 164–166, arginine 201, 208–210, glutamate 264, arginine 292, and 298–301 contribute to the substrate site; these read SID, MGR, and HVQR. Aspartate 166 acts as the Proton acceptor in catalysis. Phosphoserine is present on serine 377. The segment at 391–400 is interdomain linker; sequence QKPPKEKSNF. The segment at 401–780 is C-terminal regulatory PFK domain 2; sequence SLAILNVGAP…RRTLSMDKGF (380 aa). Residues arginine 470, 527-531, arginine 565, 572-574, and glutamate 628 each bind beta-D-fructose 2,6-bisphosphate; these read TISNN and MGG. O-linked (GlcNAc) serine glycosylation is present at serine 529. The residue at position 640 (tyrosine 640) is a Phosphotyrosine. Beta-D-fructose 2,6-bisphosphate is bound by residues arginine 654, 660–663, and arginine 734; that span reads HLQQ. At serine 775 the chain carries Phosphoserine.

It belongs to the phosphofructokinase type A (PFKA) family. ATP-dependent PFK group I subfamily. Eukaryotic two domain clade 'E' sub-subfamily. Homo- and heterotetramers. Phosphofructokinase (PFK) enzyme functions as a tetramer composed of different combinations of 3 types of subunits, called PFKM (where M stands for Muscle), PFKL (Liver) and PFKP (Platelet). The composition of the PFK tetramer differs according to the tissue type it is present in. In muscles, it is composed of 4 PFKM subunits (also called M4). In the liver, the predominant form is a tetramer of PFKL subunits (L4). In erythrocytes, both PFKM and PFKL subunits randomly tetramerize to form M4, L4 and other combinations (ML3, M2L2, M3L). The kinetic and regulatory properties of the tetrameric enzyme are dependent on the subunit composition, hence can vary across tissues. Mg(2+) is required as a cofactor. In terms of processing, glcNAcylation at Ser-529 by OGT decreases enzyme activity, leading to redirect glucose flux through the oxidative pentose phosphate pathway. Glycosylation is stimulated by both hypoxia and glucose deprivation.

The protein resides in the cytoplasm. It catalyses the reaction beta-D-fructose 6-phosphate + ATP = beta-D-fructose 1,6-bisphosphate + ADP + H(+). It functions in the pathway carbohydrate degradation; glycolysis; D-glyceraldehyde 3-phosphate and glycerone phosphate from D-glucose: step 3/4. With respect to regulation, allosterically activated by ADP, AMP, or fructose 2,6-bisphosphate, and allosterically inhibited by ATP or citrate. GlcNAcylation by OGT overcomes allosteric regulation. Catalyzes the phosphorylation of D-fructose 6-phosphate to fructose 1,6-bisphosphate by ATP, the first committing step of glycolysis. Negatively regulates the phagocyte oxidative burst in response to bacterial infection by controlling cellular NADPH biosynthesis and NADPH oxidase-derived reactive oxygen species. Upon macrophage activation, drives the metabolic switch toward glycolysis, thus preventing glucose turnover that produces NADPH via pentose phosphate pathway. The protein is ATP-dependent 6-phosphofructokinase, liver type of Homo sapiens (Human).